Consider the following 466-residue polypeptide: Transcription factor SOX-10 (466 aa).

Disordered stretches follow at residues 1–67 (MAEE…DDDK), 160–198 (LRMQHKKDHPDYKYQPRRRKNGKAAQGEAECPGGETDQG), 213–275 (DHRH…DFGN), 355–375 (QVKTETTGPQGPPHYTDQPST), and 433–466 (RPLYTAISDPSPSGPQSHSPTHWEQPVYTTLSRP). Residues 23–32 (LSPSSAPSLG) are compositionally biased toward low complexity. Residue S24 is modified to Phosphoserine. Residues 62-102 (EADDDKFPVCIREAVSQVLSGYDWTLVPMPVRVNGASKSKP) are dimerization (DIM). The segment at residues 104-172 (VKRPMNAFMV…QHKKDHPDYK (69 aa)) is a DNA-binding region (HMG box). 2 stretches are compositionally biased toward basic and acidic residues: residues 160–173 (LRMQHKKDHPDYKY) and 254–271 (ADPKRDGRSLGEGGKPHI). The interval 228–310 (PEHPSGQSHG…LPPNGHPGHV (83 aa)) is transactivation domain (TAM). The tract at residues 353–466 (KAQVKTETTG…QPVYTTLSRP (114 aa)) is transactivation domain (TAC). The span at 440 to 466 (SDPSPSGPQSHSPTHWEQPVYTTLSRP) shows a compositional bias: polar residues.

Monomer. Interacts with Armcx3 at the mitochondrial outer membrane surface. Interacts with PAX3. Predominant expression in glial cells of the nervous system.

The protein resides in the cytoplasm. Its subcellular location is the nucleus. The protein localises to the mitochondrion outer membrane. Its function is as follows. Transcription factor that plays a central role in developing and mature glia. Specifically activates expression of myelin genes, during oligodendrocyte (OL) maturation, such as DUSP15 and MYRF, thereby playing a central role in oligodendrocyte maturation and CNS myelination. Once induced, MYRF cooperates with SOX10 to implement the myelination program. Transcriptional activator of MITF, acting synergistically with PAX3. Transcriptional activator of MBP, via binding to the gene promoter. The sequence is that of Transcription factor SOX-10 (Sox10) from Rattus norvegicus (Rat).